Here is a 586-residue protein sequence, read N- to C-terminus: NudC domain-containing protein 1 (586 aa).

Residues lysine 259 to proline 278 are disordered. Residues lysine 275–valine 364 enclose the CS domain.

Its subcellular location is the cytoplasm. The protein resides in the nucleus. This Xenopus tropicalis (Western clawed frog) protein is NudC domain-containing protein 1.